A 316-amino-acid polypeptide reads, in one-letter code: 1-aminocyclopropane-1-carboxylate oxidase 2 (316 aa).

One can recognise a Fe2OG dioxygenase domain in the interval 153–253; the sequence is PNFGTKVSNY…RMSLASFYNP (101 aa). Fe cation contacts are provided by histidine 177, aspartate 179, and histidine 234.

The protein belongs to the iron/ascorbate-dependent oxidoreductase family. It depends on Fe cation as a cofactor. As to expression, leaves.

It catalyses the reaction 1-aminocyclopropane-1-carboxylate + L-ascorbate + O2 = ethene + L-dehydroascorbate + hydrogen cyanide + CO2 + 2 H2O. Its pathway is alkene biosynthesis; ethylene biosynthesis via S-adenosyl-L-methionine; ethylene from S-adenosyl-L-methionine: step 2/2. The polypeptide is 1-aminocyclopropane-1-carboxylate oxidase 2 (ACO2) (Solanum lycopersicum (Tomato)).